The following is an 81-amino-acid chain: Small cysteine-rich protein 6 (81 aa).

The signal sequence occupies residues 1–23 (MDTKVACLLLIILGALTVQGAVS). Positions 24-25 (GN) are excised as a propeptide.

It belongs to the Cnidaria small cysteine-rich protein (SCRiP) family. beta subfamily. In terms of processing, contains 4 disulfide bonds.

The protein localises to the secreted. It localises to the nematocyst. In terms of biological role, induces neurotoxic symptoms on zebrafish. Has also been claimed to be implied in calcification, but tests on homolog proteins suggest that proteins of this family have a neurotoxic function and not a calcification function. The protein is Small cysteine-rich protein 6 of Orbicella faveolata (Mountainous star coral).